We begin with the raw amino-acid sequence, 181 residues long: Inner membrane-spanning protein YciB (181 aa).

The next 5 helical transmembrane spans lie at 8–28 (FPIICFFVAYKFWGIYIATAA), 53–73 (ITLIFILLLGSFTLVFHNAIF), 76–96 (WKPTIVYWIFAIVLFGSHFFG), 121–141 (LSWALFFLILGVLNLFVVYNF), and 149–169 (FKLFGTLVLMLVFILGQAFYI).

Belongs to the YciB family.

The protein resides in the cell inner membrane. Functionally, plays a role in cell envelope biogenesis, maintenance of cell envelope integrity and membrane homeostasis. This chain is Inner membrane-spanning protein YciB, found in Coxiella burnetii (strain CbuG_Q212) (Coxiella burnetii (strain Q212)).